The chain runs to 204 residues: Lysozyme G (204 aa).

The N-terminal stretch at 1–19 (MHLMLVLLGLAALLGTSQS) is a signal peptide. Cystine bridges form between Cys-23-Cys-79 and Cys-37-Cys-48. Active-site residues include Glu-92 and Asp-105.

The protein belongs to the glycosyl hydrolase 23 family.

The protein resides in the secreted. The catalysed reaction is Hydrolysis of (1-&gt;4)-beta-linkages between N-acetylmuramic acid and N-acetyl-D-glucosamine residues in a peptidoglycan and between N-acetyl-D-glucosamine residues in chitodextrins.. Functionally, has bacteriolytic activity against M.luteus. The chain is Lysozyme G from Dromaius novaehollandiae (Emu).